Here is a 1179-residue protein sequence, read N- to C-terminus: ATP-dependent helicase/deoxyribonuclease subunit B (1179 aa).

Belongs to the helicase family. AddB/RexB type 2 subfamily. In terms of assembly, heterodimer of AddA and RexB. It depends on Mg(2+) as a cofactor.

Functionally, the heterodimer acts as both an ATP-dependent DNA helicase and an ATP-dependent, dual-direction single-stranded exonuclease. Recognizes the chi site generating a DNA molecule suitable for the initiation of homologous recombination. This subunit has 5' -&gt; 3' nuclease activity but not helicase activity. The protein is ATP-dependent helicase/deoxyribonuclease subunit B of Lactobacillus delbrueckii subsp. bulgaricus (strain ATCC 11842 / DSM 20081 / BCRC 10696 / JCM 1002 / NBRC 13953 / NCIMB 11778 / NCTC 12712 / WDCM 00102 / Lb 14).